The following is a 93-amino-acid chain: Pancreatic polypeptide prohormone (93 aa).

A signal peptide spans 1–29 (MPAACRCLFLLLLSACVALLLQPPLGTRG). Tyr-65 carries the post-translational modification Tyrosine amide. The propeptide occupies 89–93 (ELMDE).

Belongs to the NPY family.

The protein resides in the secreted. In terms of biological role, hormone secreted by pancreatic cells that acts as a regulator of pancreatic and gastrointestinal functions probably by signaling through the G protein-coupled receptor NPY4R2. The polypeptide is Pancreatic polypeptide prohormone (PPY) (Canis lupus familiaris (Dog)).